Consider the following 450-residue polypeptide: Cyclic GMP-AMP phosphodiesterase SMPDL3A (450 aa).

A signal peptide spans 1-22 (MARLGALVCCLLAAWHCRPGLG). Residues Asp-42 and His-44 each coordinate Zn(2+). Cys-59 and Cys-78 form a disulfide bridge. Zn(2+) is bound at residue Asp-107. ATP is bound at residue His-111. Residues Asn-124 and Asn-128 are each glycosylated (N-linked (GlcNAc...) asparagine). Asn-148 is a Zn(2+) binding site. Positions 148 and 149 each coordinate ATP. 2 N-linked (GlcNAc...) asparagine glycosylation sites follow: Asn-219 and Asn-235. Zn(2+) is bound by residues His-249, His-290, and His-292. 2 N-linked (GlcNAc...) asparagine glycosylation sites follow: Asn-353 and Asn-370. 2 disulfide bridges follow: Cys-417–Cys-421 and Cys-427–Cys-440.

It belongs to the acid sphingomyelinase family. As to quaternary structure, monomer. Homodimer; homodimerizes following 2',3'-cGAMP-binding. The cofactor is Zn(2+).

It is found in the secreted. It catalyses the reaction 2',3'-cGAMP + H2O = 5'-pGpA(2'-5') + H(+). The catalysed reaction is 5'-pGpA(2'-5') + H2O = 5'-GpA(2'-5') + phosphate. The enzyme catalyses a ribonucleoside 5'-triphosphate + H2O = a ribonucleoside 5'-diphosphate + phosphate + H(+). It carries out the reaction ATP + H2O = ADP + phosphate + H(+). Its function is as follows. Cyclic-nucleotide phosphodiesterase that acts as a negative regulator of innate immunity by mediating degradation of 2',3'-cGAMP, thereby inhibiting the cGAS-STING signaling. Specifically linearizes 2',3'-cGAMP into 2'5'-bond pGpA and further hydrolyzes pGpA to produce GpA. Also has in vitro nucleotide phosphodiesterase activity with nucleoside triphosphates, such as ATP. Has in vitro activity with p-nitrophenyl-TMP. Has lower activity with nucleoside diphosphates, and no activity with nucleoside monophosphates. Has in vitro activity with CDP-choline, giving rise to CMP and phosphocholine. Has in vitro activity with CDP-ethanolamine. Does not have sphingomyelin phosphodiesterase activity. This Bos taurus (Bovine) protein is Cyclic GMP-AMP phosphodiesterase SMPDL3A (SMPDL3A).